Consider the following 242-residue polypeptide: ATP-dependent dethiobiotin synthetase BioD (242 aa).

12-17 provides a ligand contact to ATP; the sequence is EVGKTV. A Mg(2+)-binding site is contributed by Thr16. Lys37 is a catalytic residue. Ser41 is a binding site for substrate. ATP contacts are provided by residues Asp51 and 112-115; that span reads EGAG. Positions 51 and 112 each coordinate Mg(2+).

It belongs to the dethiobiotin synthetase family. In terms of assembly, homodimer. Requires Mg(2+) as cofactor.

It localises to the cytoplasm. It carries out the reaction (7R,8S)-7,8-diammoniononanoate + CO2 + ATP = (4R,5S)-dethiobiotin + ADP + phosphate + 3 H(+). It functions in the pathway cofactor biosynthesis; biotin biosynthesis; biotin from 7,8-diaminononanoate: step 1/2. Functionally, catalyzes a mechanistically unusual reaction, the ATP-dependent insertion of CO2 between the N7 and N8 nitrogen atoms of 7,8-diaminopelargonic acid (DAPA, also called 7,8-diammoniononanoate) to form a ureido ring. This Bacillus anthracis (strain A0248) protein is ATP-dependent dethiobiotin synthetase BioD.